A 91-amino-acid polypeptide reads, in one-letter code: Small ribosomal subunit protein uS19 (91 aa).

It belongs to the universal ribosomal protein uS19 family.

Its function is as follows. Protein S19 forms a complex with S13 that binds strongly to the 16S ribosomal RNA. The protein is Small ribosomal subunit protein uS19 of Bordetella avium (strain 197N).